The chain runs to 98 residues: NADH-ubiquinone oxidoreductase chain 4L (98 aa).

3 helical membrane passes run 1 to 21 (MPYIYMNITLAFVISLIGTLM), 29 to 49 (SLLCLEGMMLSLFTLNALLSL), and 61 to 81 (LILLVFAACEAAVGLALLVMI).

Belongs to the complex I subunit 4L family. As to quaternary structure, core subunit of respiratory chain NADH dehydrogenase (Complex I) which is composed of 45 different subunits.

The protein localises to the mitochondrion inner membrane. The catalysed reaction is a ubiquinone + NADH + 5 H(+)(in) = a ubiquinol + NAD(+) + 4 H(+)(out). Functionally, core subunit of the mitochondrial membrane respiratory chain NADH dehydrogenase (Complex I) which catalyzes electron transfer from NADH through the respiratory chain, using ubiquinone as an electron acceptor. Part of the enzyme membrane arm which is embedded in the lipid bilayer and involved in proton translocation. This Loxodonta africana (African elephant) protein is NADH-ubiquinone oxidoreductase chain 4L (MT-ND4L).